A 271-amino-acid polypeptide reads, in one-letter code: Formamidopyrimidine-DNA glycosylase (271 aa).

The Schiff-base intermediate with DNA role is filled by P2. The active-site Proton donor is the E3. The active-site Proton donor; for beta-elimination activity is K58. DNA-binding residues include H91, R110, and R152. The FPG-type zinc-finger motif lies at 237 to 271 (WVYGRAGQSCRQCGELVSKTRQGQRSTFFCARCQH). Catalysis depends on R261, which acts as the Proton donor; for delta-elimination activity.

It belongs to the FPG family. Monomer. Requires Zn(2+) as cofactor.

It carries out the reaction Hydrolysis of DNA containing ring-opened 7-methylguanine residues, releasing 2,6-diamino-4-hydroxy-5-(N-methyl)formamidopyrimidine.. The catalysed reaction is 2'-deoxyribonucleotide-(2'-deoxyribose 5'-phosphate)-2'-deoxyribonucleotide-DNA = a 3'-end 2'-deoxyribonucleotide-(2,3-dehydro-2,3-deoxyribose 5'-phosphate)-DNA + a 5'-end 5'-phospho-2'-deoxyribonucleoside-DNA + H(+). Functionally, involved in base excision repair of DNA damaged by oxidation or by mutagenic agents. Acts as a DNA glycosylase that recognizes and removes damaged bases. Has a preference for oxidized purines, such as 7,8-dihydro-8-oxoguanine (8-oxoG). Has AP (apurinic/apyrimidinic) lyase activity and introduces nicks in the DNA strand. Cleaves the DNA backbone by beta-delta elimination to generate a single-strand break at the site of the removed base with both 3'- and 5'-phosphates. This Nitrosomonas europaea (strain ATCC 19718 / CIP 103999 / KCTC 2705 / NBRC 14298) protein is Formamidopyrimidine-DNA glycosylase.